The following is a 295-amino-acid chain: Zinc finger transcription factor pqm-1 (295 aa).

The interval 1-23 (MSFLNNDFGSPPATSSPPTTMPK) is disordered. Low complexity predominate over residues 10–22 (SPPATSSPPTTMP). The segment at 161 to 183 (YMCTVCRKVYGRYNSVSYHVTIY) adopts a C2H2-type 1; degenerate zinc-finger fold. The C2H2-type 2 zinc finger occupies 227–249 (RKCPHCRHVSKSPAMLEKHIRRH).

The protein belongs to the krueppel C2H2-type zinc-finger protein family. Interacts with ceh-60.

It localises to the chromosome. It is found in the nucleus. The protein resides in the cytoplasm. Functionally, zinc finger transcription factor which acts as both a transcriptional activator and repressor. Binds to the promoters of genes that contain the 5'-CTTATCA-3' DNA consensus sequence in their regulatory region. Functions downstream of the Insulin/IGF-1-like signaling (IIS) mediated pathway. Involved in normal development, lifespan, stress response, lipid metabolism, innate immunity and exit from the developmentally arrested larval state known as dauer. Required for stress-induced expression of hsp-90 and resistance to heat stress, perhaps as part of a systemic stress signaling pathway. Involved in maintenance of proteostasis. Under hypoxic stress increases lipid levels by positively regulating fatty acid synthesis via fat-7 expression. Associates with homeobox protein ceh-60 at the promoters of some stress-responsive genes to regulate expression; may require phosphorylation for transcriptional repression activity. Acts downstream of nhr-14 to activate transcription of intestinal metal transporter smf-3, modulating innate immunity and iron uptake. May act downstream of the mTORC2 signaling mediated pathway. May act in a mutually exclusive manner with the FOXO transcription factor daf-16. This is Zinc finger transcription factor pqm-1 from Caenorhabditis elegans.